A 502-amino-acid polypeptide reads, in one-letter code: Probable glycine dehydrogenase (decarboxylating) subunit 2 (502 aa).

Residue K273 is modified to N6-(pyridoxal phosphate)lysine.

This sequence belongs to the GcvP family. C-terminal subunit subfamily. As to quaternary structure, the glycine cleavage system is composed of four proteins: P, T, L and H. In this organism, the P 'protein' is a heterodimer of two subunits. Pyridoxal 5'-phosphate serves as cofactor.

The enzyme catalyses N(6)-[(R)-lipoyl]-L-lysyl-[glycine-cleavage complex H protein] + glycine + H(+) = N(6)-[(R)-S(8)-aminomethyldihydrolipoyl]-L-lysyl-[glycine-cleavage complex H protein] + CO2. Its function is as follows. The glycine cleavage system catalyzes the degradation of glycine. The P protein binds the alpha-amino group of glycine through its pyridoxal phosphate cofactor; CO(2) is released and the remaining methylamine moiety is then transferred to the lipoamide cofactor of the H protein. The polypeptide is Probable glycine dehydrogenase (decarboxylating) subunit 2 (Thermococcus gammatolerans (strain DSM 15229 / JCM 11827 / EJ3)).